The chain runs to 279 residues: NAD kinase (279 aa).

Aspartate 57 (proton acceptor) is an active-site residue. NAD(+) contacts are provided by residues 57–58, 133–134, arginine 159, aspartate 161, and 172–177; these read DG, NE, and TAYNKS.

This sequence belongs to the NAD kinase family. A divalent metal cation serves as cofactor.

It localises to the cytoplasm. It catalyses the reaction NAD(+) + ATP = ADP + NADP(+) + H(+). Functionally, involved in the regulation of the intracellular balance of NAD and NADP, and is a key enzyme in the biosynthesis of NADP. Catalyzes specifically the phosphorylation on 2'-hydroxyl of the adenosine moiety of NAD to yield NADP. This is NAD kinase from Streptococcus pyogenes serotype M2 (strain MGAS10270).